The chain runs to 1440 residues: Gag-Pro-Pol polyprotein (1440 aa).

Residue Gly2 is the site of N-myristoyl glycine; by host attachment. A disordered region spans residues 95–116 (EAPPSAPLAEDPQKPPPYPEQA). The PTAP/PSAP motif signature appears at 98–101 (PSAP). The PPXY motif motif lies at 109–112 (PPPY). 2 CCHC-type zinc fingers span residues 349–366 (QPCF…DCKQ) and 372–389 (GPCP…DCPQ). A Peptidase A2 domain is found at 457–535 (VQALLDTGAD…NQWTILGRDA (79 aa)). Asp462 functions as the For protease activity; shared with dimeric partner in the catalytic mechanism. The Reverse transcriptase domain maps to 593–783 (LEAKHIEPYQ…GPIHFLGQVI (191 aa)). Asp659, Asp734, Asp735, Asp1019, Glu1052, Asp1074, Asp1135, Asp1208, and Asp1265 together coordinate Mg(2+). The region spanning 1010–1143 (INHAPCLFSD…TDALMLAPLL (134 aa)) is the RNase H type-1 domain. One can recognise an Integrase catalytic domain in the interval 1197-1366 (RGHAPNDIWQ…PPVPEDTLPP (170 aa)). A DNA-binding region (integrase-type) is located at residues 1371–1420 (KWYYYKIPGLTNSRWSGPVQSLKEAAGAALIPVGGSYLWIPWRLLKRGIC).

In terms of assembly, interacts with human TSG101. This interaction is essential for budding and release of viral particles. Mg(2+) is required as a cofactor. In terms of processing, specific enzymatic cleavages by the viral protease yield mature proteins. The polyprotein is cleaved during and after budding, this process is termed maturation. The protease is autoproteolytically processed at its N- and C-termini.

It is found in the virion. It carries out the reaction Endonucleolytic cleavage to 5'-phosphomonoester.. It catalyses the reaction DNA(n) + a 2'-deoxyribonucleoside 5'-triphosphate = DNA(n+1) + diphosphate. Functionally, matrix protein p19 targets Gag, Gag-Pro and Gag-Pro-Pol polyproteins to the plasma membrane via a multipartite membrane binding signal, that includes its myristoylated N-terminus. Also mediates nuclear localization of the preintegration complex. Its function is as follows. Capsid protein p24 forms the conical core of the virus that encapsulates the genomic RNA-nucleocapsid complex. Nucleocapsid protein p15 is involved in the packaging and encapsidation of two copies of the genome. In terms of biological role, the aspartyl protease mediates proteolytic cleavages of Gag, Gag-Pro and Gag-Pro-Pol polyproteins during or shortly after the release of the virion from the plasma membrane. Cleavages take place as an ordered, step-wise cascade to yield mature proteins. This process is called maturation. Displays maximal activity during the budding process just prior to particle release from the cell. Hydrolyzes host EIF4GI in order to shut off the capped cellular mRNA translation. The resulting inhibition of cellular protein synthesis serves to ensure maximal viral gene expression and to evade host immune response. Functionally, reverse transcriptase (RT) is a multifunctional enzyme that converts the viral RNA genome into dsDNA in the cytoplasm, shortly after virus entry into the cell. This enzyme displays a DNA polymerase activity that can copy either DNA or RNA templates, and a ribonuclease H (RNase H) activity that cleaves the RNA strand of RNA-DNA heteroduplexes in a partially processive 3' to 5'-endonucleasic mode. Conversion of viral genomic RNA into dsDNA requires many steps. A tRNA-Pro binds to the primer-binding site (PBS) situated at the 5'-end of the viral RNA. RT uses the 3' end of the tRNA primer to perform a short round of RNA-dependent minus-strand DNA synthesis. The reading proceeds through the U5 region and ends after the repeated (R) region which is present at both ends of viral RNA. The portion of the RNA-DNA heteroduplex is digested by the RNase H, resulting in a ssDNA product attached to the tRNA primer. This ssDNA/tRNA hybridizes with the identical R region situated at the 3' end of viral RNA. This template exchange, known as minus-strand DNA strong stop transfer, can be either intra- or intermolecular. RT uses the 3' end of this newly synthesized short ssDNA to perform the RNA-dependent minus-strand DNA synthesis of the whole template. RNase H digests the RNA template except for a polypurine tract (PPT) situated at the 5' end of the genome. It is not clear if both polymerase and RNase H activities are simultaneous. RNase H probably can proceed both in a polymerase-dependent (RNA cut into small fragments by the same RT performing DNA synthesis) and a polymerase-independent mode (cleavage of remaining RNA fragments by free RTs). Secondly, RT performs DNA-directed plus-strand DNA synthesis using the PPT that has not been removed by RNase H as primer. PPT and tRNA primers are then removed by RNase H. The 3' and 5' ssDNA PBS regions hybridize to form a circular dsDNA intermediate. Strand displacement synthesis by RT to the PBS and PPT ends produces a blunt ended, linear dsDNA copy of the viral genome that includes long terminal repeats (LTRs) at both ends. Its function is as follows. Integrase catalyzes viral DNA integration into the host chromosome, by performing a series of DNA cutting and joining reactions. This enzyme activity takes place after virion entry into a cell and reverse transcription of the RNA genome in dsDNA. The first step in the integration process is 3' processing. This step requires a complex comprising the viral genome, matrix protein, and integrase. This complex is called the pre-integration complex (PIC). The integrase protein removes 2 nucleotides from each 3' end of the viral DNA, leaving recessed dinucleotides OH's at the 3' ends. In the second step, the PIC access cell chromosomes during cell division. The third step, termed strand transfer, the integrase protein joins the previously processed 3' ends to the 5'-ends of strands of target cellular DNA at the site of integration. The 5'-ends are produced by integrase-catalyzed staggered cuts, 5 bp apart. A Y-shaped, gapped, recombination intermediate results, with the 5'-ends of the viral DNA strands and the 3' ends of target DNA strands remaining unjoined, flanking a gap of 5 bp. The last step is viral DNA integration into host chromosome. This involves host DNA repair synthesis in which the 5 bp gaps between the unjoined strands (see above) are filled in and then ligated. The chain is Gag-Pro-Pol polyprotein (gag-pro-pol) from Human T-cell leukemia virus 3 (strain 2026ND) (HTLV-3).